A 215-amino-acid chain; its full sequence is Sodium channel regulatory subunit beta-3 (215 aa).

The first 22 residues, 1–22 (MPAFNRLFPLASLVLIYWVSVC), serve as a signal peptide directing secretion. Topologically, residues 23–156 (FPVCVEVPSE…EEAGEDFTSV (134 aa)) are extracellular. Cystine bridges form between Cys26-Cys48 and Cys45-Cys120. The 123-residue stretch at 32 to 154 (ETEAVQGNPM…VTEEAGEDFT (123 aa)) folds into the Ig-like C2-type domain. Residues Asn95, Asn109, Asn113, and Asn121 are each glycosylated (N-linked (GlcNAc...) asparagine). The helical transmembrane segment at 157–178 (VSEIMMYILLVFLTLWLLIEMI) threads the bilayer. Topologically, residues 179–215 (YCYRKVSKAEEAAQENASDYLAIPSENKENSAVPVEE) are cytoplasmic.

The protein belongs to the sodium channel auxiliary subunit SCN3B (TC 8.A.17) family. As to quaternary structure, a voltage-gated sodium (Nav) channel consists of an ion-conducting pore-forming alpha subunit functional on its own that is regulated by one or more beta subunits. Forms homodimers and homotrimers. SCN3B is non-covalently associated with alpha subunits and induces the formation of alpha subunit oligomers, including trimers. Interacts with SCN5A/Nav1.5; regulatory subunit of SCN5A/Nav1.5. Interacts with SCN7A/Nav2.1; probable regulatory subunit of SCN7A/Nav2.1. Interacts with SCN10A; regulatory subunit of SCN10A/Nav1.8. Interacts with NFASC; probably involved in targeting the sodium channels to the nodes of Ranvier. Intramolecular disulfide bonds favor the voltage-gated sodium channel oligomeric complex assembly. Post-translationally, N-glycosylated. In terms of tissue distribution, expressed in the atrium.

Its subcellular location is the cell membrane. Its function is as follows. Regulatory subunit of multiple voltage-gated sodium (Nav) channels directly mediating the depolarization of excitable membranes. Navs, also called VGSCs (voltage-gated sodium channels) or VDSCs (voltage-dependent sodium channels), operate by switching between closed and open conformations depending on the voltage difference across the membrane. In the open conformation they allow Na(+) ions to selectively pass through the pore, along their electrochemical gradient. The influx of Na+ ions provokes membrane depolarization, initiating the propagation of electrical signals throughout cells and tissues. The accessory beta subunits participate in localization and functional modulation of the Nav channels. Modulates the activity of SCN2A/Nav1.2, causing a hyperpolarizing shift in the voltage-dependence of inactivation of the channel and increasing the fraction of channels operating in the fast gating mode. Modulates the activity of SCN5A/Nav1.5. Could also regulate the atypical sodium channel SCN7A/Nav2.1. Modulates the activity of SCN10A/Nav1.8, regulating its oligomerization and accelerating the recovery from inactivation. The polypeptide is Sodium channel regulatory subunit beta-3 (Homo sapiens (Human)).